Here is a 273-residue protein sequence, read N- to C-terminus: Progestin and adipoQ receptor family member 4 (273 aa).

A run of 5 helical transmembrane segments spans residues isoleucine 52–tryptophan 72, glycine 79–tyrosine 99, leucine 115–isoleucine 135, leucine 185–cysteine 205, and leucine 245–alanine 265.

Belongs to the ADIPOR family. Interacts with CERS2 and CERS5; the interaction regulates CERS2 and CERS5 stabilities and activities and is inhibited in presence of ceramides. In terms of tissue distribution, expressed in adipose tissue.

It is found in the golgi apparatus membrane. Plays a role in maintaining adipose tissue function through the regulation of ceramide levels. Mediates the stability of ceramide synthetases, CERS2 and CERS5, and their activities. The chain is Progestin and adipoQ receptor family member 4 from Mus musculus (Mouse).